Reading from the N-terminus, the 144-residue chain is MAIERTLSIIKPDAVAKNVIGQIYSRFEKAGLKIIAAKMCHLSKPQAEKFYAVHKDRPFYPDLVKFMTQGPVMIQVLEGENAIVKNREIMGATNPKEALPGTIRADFADSIDANAVHGSDGPETAKEEIAFFFKPDESFNSIGV.

Residues Lys-11, Phe-59, Arg-87, Thr-93, Arg-104, and Asn-114 each contribute to the ATP site. His-117 acts as the Pros-phosphohistidine intermediate in catalysis.

It belongs to the NDK family. Homotetramer. It depends on Mg(2+) as a cofactor.

It localises to the cytoplasm. The enzyme catalyses a 2'-deoxyribonucleoside 5'-diphosphate + ATP = a 2'-deoxyribonucleoside 5'-triphosphate + ADP. The catalysed reaction is a ribonucleoside 5'-diphosphate + ATP = a ribonucleoside 5'-triphosphate + ADP. In terms of biological role, major role in the synthesis of nucleoside triphosphates other than ATP. The ATP gamma phosphate is transferred to the NDP beta phosphate via a ping-pong mechanism, using a phosphorylated active-site intermediate. This Coxiella burnetii (strain CbuG_Q212) (Coxiella burnetii (strain Q212)) protein is Nucleoside diphosphate kinase.